The primary structure comprises 262 residues: 3-methyl-2-oxobutanoate hydroxymethyltransferase (262 aa).

Mg(2+) is bound by residues D42 and D81. Residues 42-43, D81, and K110 contribute to the 3-methyl-2-oxobutanoate site; that span reads DS. E112 is a Mg(2+) binding site. E180 acts as the Proton acceptor in catalysis.

It belongs to the PanB family. Homodecamer; pentamer of dimers. Mg(2+) serves as cofactor.

It localises to the cytoplasm. It catalyses the reaction 3-methyl-2-oxobutanoate + (6R)-5,10-methylene-5,6,7,8-tetrahydrofolate + H2O = 2-dehydropantoate + (6S)-5,6,7,8-tetrahydrofolate. It functions in the pathway cofactor biosynthesis; (R)-pantothenate biosynthesis; (R)-pantoate from 3-methyl-2-oxobutanoate: step 1/2. Its function is as follows. Catalyzes the reversible reaction in which hydroxymethyl group from 5,10-methylenetetrahydrofolate is transferred onto alpha-ketoisovalerate to form ketopantoate. The polypeptide is 3-methyl-2-oxobutanoate hydroxymethyltransferase (Legionella pneumophila (strain Lens)).